A 386-amino-acid polypeptide reads, in one-letter code: Succinate--CoA ligase [ADP-forming] subunit beta (386 aa).

ATP contacts are provided by residues Lys-46, 53–55, Glu-99, Ala-102, and Glu-107; that span reads GRG. Asn-199 and Asp-213 together coordinate Mg(2+). Substrate-binding positions include Asn-264 and 321 to 323; that span reads GIV.

Belongs to the succinate/malate CoA ligase beta subunit family. Heterotetramer of two alpha and two beta subunits. It depends on Mg(2+) as a cofactor.

It carries out the reaction succinate + ATP + CoA = succinyl-CoA + ADP + phosphate. The enzyme catalyses GTP + succinate + CoA = succinyl-CoA + GDP + phosphate. It participates in carbohydrate metabolism; tricarboxylic acid cycle; succinate from succinyl-CoA (ligase route): step 1/1. Functionally, succinyl-CoA synthetase functions in the citric acid cycle (TCA), coupling the hydrolysis of succinyl-CoA to the synthesis of either ATP or GTP and thus represents the only step of substrate-level phosphorylation in the TCA. The beta subunit provides nucleotide specificity of the enzyme and binds the substrate succinate, while the binding sites for coenzyme A and phosphate are found in the alpha subunit. The protein is Succinate--CoA ligase [ADP-forming] subunit beta of Actinobacillus succinogenes (strain ATCC 55618 / DSM 22257 / CCUG 43843 / 130Z).